The following is a 444-amino-acid chain: Squalene synthase ERG9 (444 aa).

The helical transmembrane segment at Phe421 to Leu441 threads the bilayer.

It belongs to the phytoene/squalene synthase family. Mg(2+) is required as a cofactor.

It localises to the endoplasmic reticulum membrane. The protein localises to the microsome. It catalyses the reaction 2 (2E,6E)-farnesyl diphosphate + NADPH + H(+) = squalene + 2 diphosphate + NADP(+). The enzyme catalyses 2 (2E,6E)-farnesyl diphosphate + NADH + H(+) = squalene + 2 diphosphate + NAD(+). It participates in terpene metabolism; lanosterol biosynthesis; lanosterol from farnesyl diphosphate: step 1/3. In terms of biological role, squalene synthase; part of the third module of ergosterol biosynthesis pathway that includes the late steps of the pathway. ERG9 produces squalene from 2 farnesyl pyrophosphate moieties. The third module or late pathway involves the ergosterol synthesis itself through consecutive reactions that mainly occur in the endoplasmic reticulum (ER) membrane. Firstly, the squalene synthase ERG9 catalyzes the condensation of 2 farnesyl pyrophosphate moieties to form squalene, which is the precursor of all steroids. Squalene synthase is crucial for balancing the incorporation of farnesyl diphosphate (FPP) into sterol and nonsterol isoprene synthesis. Secondly, the squalene epoxidase ERG1 catalyzes the stereospecific oxidation of squalene to (S)-2,3-epoxysqualene, which is considered to be a rate-limiting enzyme in steroid biosynthesis. Then, the lanosterol synthase ERG7 catalyzes the cyclization of (S)-2,3 oxidosqualene to lanosterol, a reaction that forms the sterol core. In the next steps, lanosterol is transformed to zymosterol through a complex process involving various demethylation, reduction and desaturation reactions. The lanosterol 14-alpha-demethylase ERG11 (also known as CYP51) catalyzes C14-demethylation of lanosterol to produce 4,4'-dimethyl cholesta-8,14,24-triene-3-beta-ol, which is critical for ergosterol biosynthesis. The C-14 reductase ERG24 reduces the C14=C15 double bond of 4,4-dimethyl-cholesta-8,14,24-trienol to produce 4,4-dimethyl-cholesta-8,24-dienol. 4,4-dimethyl-cholesta-8,24-dienol is substrate of the C-4 demethylation complex ERG25-ERG26-ERG27 in which ERG25 catalyzes the three-step monooxygenation required for the demethylation of 4,4-dimethyl and 4alpha-methylsterols, ERG26 catalyzes the oxidative decarboxylation that results in a reduction of the 3-beta-hydroxy group at the C-3 carbon to an oxo group, and ERG27 is responsible for the reduction of the keto group on the C-3. ERG28 has a role as a scaffold to help anchor ERG25, ERG26 and ERG27 to the endoplasmic reticulum and ERG29 regulates the activity of the iron-containing C4-methylsterol oxidase ERG25. Then, the sterol 24-C-methyltransferase ERG6 catalyzes the methyl transfer from S-adenosyl-methionine to the C-24 of zymosterol to form fecosterol. The C-8 sterol isomerase ERG2 catalyzes the reaction which results in unsaturation at C-7 in the B ring of sterols and thus converts fecosterol to episterol. The sterol-C5-desaturase ERG3 then catalyzes the introduction of a C-5 double bond in the B ring to produce 5-dehydroepisterol. The C-22 sterol desaturase ERG5 further converts 5-dehydroepisterol into ergosta-5,7,22,24(28)-tetraen-3beta-ol by forming the C-22(23) double bond in the sterol side chain. Finally, ergosta-5,7,22,24(28)-tetraen-3beta-ol is substrate of the C-24(28) sterol reductase ERG4 to produce ergosterol. This chain is Squalene synthase ERG9, found in Saccharomyces cerevisiae (strain ATCC 204508 / S288c) (Baker's yeast).